The primary structure comprises 347 residues: Phosphoribosylformylglycinamidine cyclo-ligase (347 aa).

It belongs to the AIR synthase family.

The protein resides in the cytoplasm. The enzyme catalyses 2-formamido-N(1)-(5-O-phospho-beta-D-ribosyl)acetamidine + ATP = 5-amino-1-(5-phospho-beta-D-ribosyl)imidazole + ADP + phosphate + H(+). It participates in purine metabolism; IMP biosynthesis via de novo pathway; 5-amino-1-(5-phospho-D-ribosyl)imidazole from N(2)-formyl-N(1)-(5-phospho-D-ribosyl)glycinamide: step 2/2. This is Phosphoribosylformylglycinamidine cyclo-ligase from Alkalilimnicola ehrlichii (strain ATCC BAA-1101 / DSM 17681 / MLHE-1).